We begin with the raw amino-acid sequence, 169 residues long: Lipoprotein signal peptidase (169 aa).

The next 3 helical transmembrane spans lie at 12 to 32, 70 to 90, and 102 to 122; these read WLWL…WILG, WFFA…MYRS, and AFII…GFVV. Residues aspartate 123 and aspartate 141 contribute to the active site. Residues 137–157 traverse the membrane as a helical segment; the sequence is FNLADSFICVGAAMIVLEGFL.

It belongs to the peptidase A8 family.

Its subcellular location is the cell inner membrane. It catalyses the reaction Release of signal peptides from bacterial membrane prolipoproteins. Hydrolyzes -Xaa-Yaa-Zaa-|-(S,diacylglyceryl)Cys-, in which Xaa is hydrophobic (preferably Leu), and Yaa (Ala or Ser) and Zaa (Gly or Ala) have small, neutral side chains.. It functions in the pathway protein modification; lipoprotein biosynthesis (signal peptide cleavage). Its function is as follows. This protein specifically catalyzes the removal of signal peptides from prolipoproteins. This is Lipoprotein signal peptidase from Serratia proteamaculans (strain 568).